The primary structure comprises 145 residues: 3-hydroxyacyl-[acyl-carrier-protein] dehydratase FabZ (145 aa).

Residue H51 is part of the active site.

It belongs to the thioester dehydratase family. FabZ subfamily.

Its subcellular location is the cytoplasm. The catalysed reaction is a (3R)-hydroxyacyl-[ACP] = a (2E)-enoyl-[ACP] + H2O. Its function is as follows. Involved in unsaturated fatty acids biosynthesis. Catalyzes the dehydration of short chain beta-hydroxyacyl-ACPs and long chain saturated and unsaturated beta-hydroxyacyl-ACPs. The sequence is that of 3-hydroxyacyl-[acyl-carrier-protein] dehydratase FabZ from Staphylococcus carnosus (strain TM300).